A 210-amino-acid chain; its full sequence is Proteasome subunit beta 2 (210 aa).

Residues 1-12 (MSNNVEEKILHG) constitute a propeptide, removed in mature form; by autocatalysis. Residue T13 is the Nucleophile of the active site.

Belongs to the peptidase T1B family. In terms of assembly, the 20S proteasome core is composed of 14 alpha and 14 beta subunits that assemble into four stacked heptameric rings, resulting in a barrel-shaped structure. The two inner rings, each composed of seven catalytic beta subunits, are sandwiched by two outer rings, each composed of seven alpha subunits. The catalytic chamber with the active sites is on the inside of the barrel. Has a gated structure, the ends of the cylinder being occluded by the N-termini of the alpha-subunits. Is capped at one or both ends by the proteasome regulatory ATPase, PAN.

It localises to the cytoplasm. The catalysed reaction is Cleavage of peptide bonds with very broad specificity.. The formation of the proteasomal ATPase PAN-20S proteasome complex, via the docking of the C-termini of PAN into the intersubunit pockets in the alpha-rings, triggers opening of the gate for substrate entry. Interconversion between the open-gate and close-gate conformations leads to a dynamic regulation of the 20S proteasome proteolysis activity. In terms of biological role, component of the proteasome core, a large protease complex with broad specificity involved in protein degradation. In Nitrosopumilus maritimus (strain SCM1), this protein is Proteasome subunit beta 2.